The primary structure comprises 334 residues: Beta-ketoacyl-[acyl-carrier-protein] synthase III (334 aa).

Catalysis depends on residues Cys-114 and His-253. Residues 254–258 are ACP-binding; sequence QANIR. Residue Asn-283 is part of the active site.

Belongs to the thiolase-like superfamily. FabH family. In terms of assembly, homodimer.

Its subcellular location is the cytoplasm. The catalysed reaction is malonyl-[ACP] + acetyl-CoA + H(+) = 3-oxobutanoyl-[ACP] + CO2 + CoA. The protein operates within lipid metabolism; fatty acid biosynthesis. Its function is as follows. Catalyzes the condensation reaction of fatty acid synthesis by the addition to an acyl acceptor of two carbons from malonyl-ACP. Catalyzes the first condensation reaction which initiates fatty acid synthesis and may therefore play a role in governing the total rate of fatty acid production. Possesses both acetoacetyl-ACP synthase and acetyl transacylase activities. Its substrate specificity determines the biosynthesis of branched-chain and/or straight-chain of fatty acids. The sequence is that of Beta-ketoacyl-[acyl-carrier-protein] synthase III from Campylobacter concisus (strain 13826).